A 288-amino-acid polypeptide reads, in one-letter code: 4-diphosphocytidyl-2-C-methyl-D-erythritol kinase (288 aa).

Lys11 is an active-site residue. ATP is bound at residue 95 to 105 (PVAAGMAGGSS). The active site involves Asp137.

The protein belongs to the GHMP kinase family. IspE subfamily.

The enzyme catalyses 4-CDP-2-C-methyl-D-erythritol + ATP = 4-CDP-2-C-methyl-D-erythritol 2-phosphate + ADP + H(+). The protein operates within isoprenoid biosynthesis; isopentenyl diphosphate biosynthesis via DXP pathway; isopentenyl diphosphate from 1-deoxy-D-xylulose 5-phosphate: step 3/6. In terms of biological role, catalyzes the phosphorylation of the position 2 hydroxy group of 4-diphosphocytidyl-2C-methyl-D-erythritol. The protein is 4-diphosphocytidyl-2-C-methyl-D-erythritol kinase of Lachnospira eligens (strain ATCC 27750 / DSM 3376 / VPI C15-48 / C15-B4) (Eubacterium eligens).